The following is a 955-amino-acid chain: 2-oxoglutarate dehydrogenase E1 component (955 aa).

The protein belongs to the alpha-ketoglutarate dehydrogenase family. In terms of assembly, homodimer. Part of the 2-oxoglutarate dehydrogenase (OGDH) complex composed of E1 (2-oxoglutarate dehydrogenase), E2 (dihydrolipoamide succinyltransferase) and E3 (dihydrolipoamide dehydrogenase); the complex contains multiple copies of the three enzymatic components (E1, E2 and E3). Thiamine diphosphate is required as a cofactor.

It carries out the reaction N(6)-[(R)-lipoyl]-L-lysyl-[protein] + 2-oxoglutarate + H(+) = N(6)-[(R)-S(8)-succinyldihydrolipoyl]-L-lysyl-[protein] + CO2. Functionally, E1 component of the 2-oxoglutarate dehydrogenase (OGDH) complex which catalyzes the decarboxylation of 2-oxoglutarate, the first step in the conversion of 2-oxoglutarate to succinyl-CoA and CO(2). The sequence is that of 2-oxoglutarate dehydrogenase E1 component from Bacillus cereus (strain AH820).